Consider the following 460-residue polypeptide: T-box transcription factor TBX1 (460 aa).

Disordered stretches follow at residues 30–53 (LNTP…ESQF) and 67–99 (GSNS…TLVK). Over residues 67–84 (GSNSAQAPAQGDSGTSNC) the composition is skewed to polar residues. Positions 116-294 (LWDEFNQLGT…SNPFAKGFRD (179 aa)) form a DNA-binding region, T-box. 2 disordered regions span residues 317–355 (RTRN…DPTH) and 376–400 (PLTA…PDTL). A compositionally biased stretch (polar residues) spans 320 to 330 (NPMSSPPQQNG). The segment covering 331–344 (TEKEDSRREYDRDP) has biased composition (basic and acidic residues). Positions 418–429 (KTRPSPYPSPSI) match the Nuclear localization signal motif.

Binds DNA as a dimer. In terms of tissue distribution, expressed in the ear and mesendodermal components of pharyngeal arches.

The protein resides in the nucleus. In terms of biological role, probable transcriptional regulator involved in developmental processes. Binds to the palindromic T site 5'-TTCACACCTAGGTGTGAA-3' DNA sequence. Is required for normal development of the pharyngeal arch arteries. Acts cell autonomously in the pharyngeal mesendoderm and influences the development of neural crest-derived cartilages secondarily. In Danio rerio (Zebrafish), this protein is T-box transcription factor TBX1 (tbx1).